The chain runs to 212 residues: Holliday junction branch migration complex subunit RuvA (212 aa).

Residues 1 to 63 (MIAKLKGLID…EDAISLFGFL (63 aa)) are domain I. Residues 64 to 142 (ETGERDWFRL…KIALGGFSPG (79 aa)) are domain II. The interval 143 to 155 (GIKDALSASAPLP) is flexible linker. Positions 156–212 (AASGRMEDAVSALVNLGYKRLEAFQAVGETARELGDEADSSALIRAALKHLGKGLLG) are domain III.

Belongs to the RuvA family. Homotetramer. Forms an RuvA(8)-RuvB(12)-Holliday junction (HJ) complex. HJ DNA is sandwiched between 2 RuvA tetramers; dsDNA enters through RuvA and exits via RuvB. An RuvB hexamer assembles on each DNA strand where it exits the tetramer. Each RuvB hexamer is contacted by two RuvA subunits (via domain III) on 2 adjacent RuvB subunits; this complex drives branch migration. In the full resolvosome a probable DNA-RuvA(4)-RuvB(12)-RuvC(2) complex forms which resolves the HJ.

The protein localises to the cytoplasm. Functionally, the RuvA-RuvB-RuvC complex processes Holliday junction (HJ) DNA during genetic recombination and DNA repair, while the RuvA-RuvB complex plays an important role in the rescue of blocked DNA replication forks via replication fork reversal (RFR). RuvA specifically binds to HJ cruciform DNA, conferring on it an open structure. The RuvB hexamer acts as an ATP-dependent pump, pulling dsDNA into and through the RuvAB complex. HJ branch migration allows RuvC to scan DNA until it finds its consensus sequence, where it cleaves and resolves the cruciform DNA. This chain is Holliday junction branch migration complex subunit RuvA, found in Paramagnetospirillum magneticum (strain ATCC 700264 / AMB-1) (Magnetospirillum magneticum).